The following is a 198-amino-acid chain: 3-isopropylmalate dehydratase small subunit (198 aa).

This sequence belongs to the LeuD family. LeuD type 1 subfamily. In terms of assembly, heterodimer of LeuC and LeuD.

The enzyme catalyses (2R,3S)-3-isopropylmalate = (2S)-2-isopropylmalate. The protein operates within amino-acid biosynthesis; L-leucine biosynthesis; L-leucine from 3-methyl-2-oxobutanoate: step 2/4. Catalyzes the isomerization between 2-isopropylmalate and 3-isopropylmalate, via the formation of 2-isopropylmaleate. The sequence is that of 3-isopropylmalate dehydratase small subunit from Mycolicibacterium paratuberculosis (strain ATCC BAA-968 / K-10) (Mycobacterium paratuberculosis).